Here is a 547-residue protein sequence, read N- to C-terminus: Probable terpene synthase 3 (547 aa).

D298, D302, and E451 together coordinate Mg(2+). The DDXXD motif motif lies at 298–302; the sequence is DDIYD.

Belongs to the terpene synthase family. The cofactor is Mg(2+).

Probable sesquiterpene synthase. The sequence is that of Probable terpene synthase 3 (TPS3) from Ricinus communis (Castor bean).